A 124-amino-acid chain; its full sequence is Phosphoribosyl-AMP cyclohydrolase (124 aa).

D82 is a binding site for Mg(2+). Position 83 (C83) interacts with Zn(2+). The Mg(2+) site is built by D84 and D86. Zn(2+) is bound by residues C99 and C106.

It belongs to the PRA-CH family. In terms of assembly, homodimer. Requires Mg(2+) as cofactor. Zn(2+) serves as cofactor.

It localises to the cytoplasm. It catalyses the reaction 1-(5-phospho-beta-D-ribosyl)-5'-AMP + H2O = 1-(5-phospho-beta-D-ribosyl)-5-[(5-phospho-beta-D-ribosylamino)methylideneamino]imidazole-4-carboxamide. Its pathway is amino-acid biosynthesis; L-histidine biosynthesis; L-histidine from 5-phospho-alpha-D-ribose 1-diphosphate: step 3/9. Functionally, catalyzes the hydrolysis of the adenine ring of phosphoribosyl-AMP. This is Phosphoribosyl-AMP cyclohydrolase from Rhizorhabdus wittichii (strain DSM 6014 / CCUG 31198 / JCM 15750 / NBRC 105917 / EY 4224 / RW1) (Sphingomonas wittichii).